We begin with the raw amino-acid sequence, 213 residues long: Glutathione S-transferase DHAR2 (213 aa).

At Cys-6 the chain carries S-glutathionyl cysteine. Residues Lys-8 and Asp-19 each contribute to the glutathione site. 2 residues coordinate L-ascorbate: Lys-8 and Asp-19. The GST N-terminal domain occupies 10-83 (AVGAPDVLGD…DVIVGLLEEK (74 aa)). At Cys-20 the chain carries S-glutathionyl cysteine. The active-site Nucleophile is Cys-20. The short motif at 20–25 (CPFSQR) is the Glutathione-binding element. Glutathione is bound by residues Lys-47, Val-60, Ser-73, His-160, and Trp-207. Positions 84 to 213 (YPEPSLKTPP…VAGWESKVNA (130 aa)) constitute a GST C-terminal domain. Residue Lys-210 participates in L-ascorbate binding.

The protein belongs to the GST superfamily. DHAR family. In terms of assembly, monomer. Spontaneous S-glutathionylation in the presence of oxidized glutathione (GSSG).

The protein resides in the cytoplasm. It is found in the cytosol. The catalysed reaction is RX + glutathione = an S-substituted glutathione + a halide anion + H(+). It catalyses the reaction L-dehydroascorbate + 2 glutathione = glutathione disulfide + L-ascorbate. In terms of biological role, displays a dual function. As a soluble protein, exhibits glutathione-dependent thiol transferase and dehydroascorbate (DHA) reductase activities. Exhibits glutathione-dependent thiol transferase and dehydroascorbate (DHA) reductase activities. Key component of the ascorbate recycling system. Involved in the redox homeostasis, especially in scavenging of ROS under oxidative stresses. Plays a role in ozone tolerance. The chain is Glutathione S-transferase DHAR2 (DHAR2) from Arabidopsis thaliana (Mouse-ear cress).